A 448-amino-acid polypeptide reads, in one-letter code: Probable ribonuclease FAU-1 (448 aa).

It belongs to the FAU-1 family.

In terms of biological role, probable RNase involved in rRNA stability through maturation and/or degradation of precursor rRNAs. Binds to RNA in loop regions with AU-rich sequences. This Pyrobaculum calidifontis (strain DSM 21063 / JCM 11548 / VA1) protein is Probable ribonuclease FAU-1.